Reading from the N-terminus, the 317-residue chain is E3 ubiquitin-protein ligase NRDP1 (317 aa).

The segment at 18–57 (CPICSGVLEEPVQAPHCEHAFCNACITQWFSQQQTCPVDR) adopts an RING-type; degenerate zinc-finger fold. The SIAH-type; degenerate zinc finger occupies 78–138 (KLQIACDNAV…LPNHNCIKHL (61 aa)).

In terms of assembly, interacts with USP8, ERBB3, PRKN and BIRC6. Interacts with CSF2RB, EPOR, IL3RA, MYD88 and TBK1. Interacts with CLEC16A. In terms of processing, autoubiquitinated. Autoubiquitination leads to proteasomal degradation. Deubiquitinated by USP8 to get stabilized which induces apoptosis. Detected in ovary, testis and prostate.

It carries out the reaction S-ubiquitinyl-[E2 ubiquitin-conjugating enzyme]-L-cysteine + [acceptor protein]-L-lysine = [E2 ubiquitin-conjugating enzyme]-L-cysteine + N(6)-ubiquitinyl-[acceptor protein]-L-lysine.. Its pathway is protein modification; protein ubiquitination. Functionally, acts as E3 ubiquitin-protein ligase and regulates the degradation of target proteins. Polyubiquitinates MYD88. Negatively regulates MYD88-dependent production of pro-inflammatory cytokines. Can promote TRIF-dependent production of type I interferon and inhibits infection with vesicular stomatitis virus. Promotes also activation of TBK1 and IRF3. Involved in the ubiquitination of erythropoietin (EPO) and interleukin-3 (IL-3) receptors. Thus, through maintaining basal levels of cytokine receptors, RNF41 is involved in the control of hematopoietic progenitor cell differentiation into myeloerythroid lineages. Contributes to the maintenance of steady-state ERBB3 levels by mediating its growth factor-independent degradation. Involved in the degradation of the inhibitor of apoptosis BIRC6 and thus is an important regulator of cell death by promoting apoptosis. Also acts as a PRKN modifier that accelerates its degradation, resulting in a reduction of PRKN activity, influencing the balance of intracellular redox state. The RNF41-PRKN pathway regulates autophagosome-lysosome fusion during late mitophagy. Mitophagy is a selective form of autophagy necessary for mitochondrial quality control. This chain is E3 ubiquitin-protein ligase NRDP1 (RNF41), found in Homo sapiens (Human).